The primary structure comprises 531 residues: Phosphoinositide phospholipase C 9 (531 aa).

In terms of domain architecture, PI-PLC X-box spans 107-253 (RDMNAPLSHY…LQNKILISRR (147 aa)). The 121-residue stretch at 265 to 385 (ENGVELEIQE…GYVKKPNFLL (121 aa)) folds into the PI-PLC Y-box domain. Position 276 is a phosphoserine (S276). The C2 domain occupies 386-513 (NAGSSGVFYP…EGIRAVPLYD (128 aa)).

The cofactor is Ca(2+). As to expression, expressed in leaves, roots, flowers and siliques.

It localises to the cell membrane. The catalysed reaction is a 1,2-diacyl-sn-glycero-3-phospho-(1D-myo-inositol-4,5-bisphosphate) + H2O = 1D-myo-inositol 1,4,5-trisphosphate + a 1,2-diacyl-sn-glycerol + H(+). In terms of biological role, the production of the second messenger molecules diacylglycerol (DAG) and inositol 1,4,5-trisphosphate (IP3) is mediated by activated phosphatidylinositol-specific phospholipase C enzymes. The polypeptide is Phosphoinositide phospholipase C 9 (PLC9) (Arabidopsis thaliana (Mouse-ear cress)).